A 275-amino-acid polypeptide reads, in one-letter code: 4-hydroxy-3-methylbut-2-enyl diphosphate reductase (275 aa).

Cysteine 12 serves as a coordination point for [4Fe-4S] cluster. 2 residues coordinate (2E)-4-hydroxy-3-methylbut-2-enyl diphosphate: histidine 40 and histidine 70. Dimethylallyl diphosphate-binding residues include histidine 40 and histidine 70. Residues histidine 40 and histidine 70 each contribute to the isopentenyl diphosphate site. Cysteine 92 contacts [4Fe-4S] cluster. (2E)-4-hydroxy-3-methylbut-2-enyl diphosphate is bound at residue histidine 119. Histidine 119 serves as a coordination point for dimethylallyl diphosphate. Histidine 119 serves as a coordination point for isopentenyl diphosphate. Glutamate 121 functions as the Proton donor in the catalytic mechanism. Residue threonine 151 coordinates (2E)-4-hydroxy-3-methylbut-2-enyl diphosphate. A [4Fe-4S] cluster-binding site is contributed by cysteine 181. (2E)-4-hydroxy-3-methylbut-2-enyl diphosphate is bound by residues serine 209, serine 210, asparagine 211, and serine 251. Residues serine 209, serine 210, asparagine 211, and serine 251 each contribute to the dimethylallyl diphosphate site. Residues serine 209, serine 210, asparagine 211, and serine 251 each contribute to the isopentenyl diphosphate site.

It belongs to the IspH family. [4Fe-4S] cluster serves as cofactor.

It carries out the reaction isopentenyl diphosphate + 2 oxidized [2Fe-2S]-[ferredoxin] + H2O = (2E)-4-hydroxy-3-methylbut-2-enyl diphosphate + 2 reduced [2Fe-2S]-[ferredoxin] + 2 H(+). The enzyme catalyses dimethylallyl diphosphate + 2 oxidized [2Fe-2S]-[ferredoxin] + H2O = (2E)-4-hydroxy-3-methylbut-2-enyl diphosphate + 2 reduced [2Fe-2S]-[ferredoxin] + 2 H(+). It functions in the pathway isoprenoid biosynthesis; dimethylallyl diphosphate biosynthesis; dimethylallyl diphosphate from (2E)-4-hydroxy-3-methylbutenyl diphosphate: step 1/1. Its pathway is isoprenoid biosynthesis; isopentenyl diphosphate biosynthesis via DXP pathway; isopentenyl diphosphate from 1-deoxy-D-xylulose 5-phosphate: step 6/6. Its function is as follows. Catalyzes the conversion of 1-hydroxy-2-methyl-2-(E)-butenyl 4-diphosphate (HMBPP) into a mixture of isopentenyl diphosphate (IPP) and dimethylallyl diphosphate (DMAPP). Acts in the terminal step of the DOXP/MEP pathway for isoprenoid precursor biosynthesis. The chain is 4-hydroxy-3-methylbut-2-enyl diphosphate reductase from Thermotoga maritima (strain ATCC 43589 / DSM 3109 / JCM 10099 / NBRC 100826 / MSB8).